The sequence spans 227 residues: MTAIAPVITIDGPSGAGKGTLCKAMAEALQWHLLDSGAIYRVLALAALHHHVDLASEDALVPLASHLDVRFVSTDGNLEVILEGEDVSGEIRTQEVANAASQVAAFPRVREALLRRQRAFRKAPGLIADGRDMGTVVFPDAPVKIFLDASSEERAHRRMLQLQENGFSVNFERLLAEIKERDDRDRNRAVAPLVPAADALVLDSTRLSIEQVIEKALQYARQKLALA.

Residue 12-20 (GPSGAGKGT) coordinates ATP.

Belongs to the cytidylate kinase family. Type 1 subfamily.

The protein resides in the cytoplasm. It catalyses the reaction CMP + ATP = CDP + ADP. The enzyme catalyses dCMP + ATP = dCDP + ADP. The sequence is that of Cytidylate kinase from Salmonella choleraesuis (strain SC-B67).